Reading from the N-terminus, the 1073-residue chain is Carbamoyl phosphate synthase large chain (1073 aa).

The segment at 2–403 (PKRTDIKSIL…SLQKALRGLE (402 aa)) is carboxyphosphate synthetic domain. Residues R129, R169, G175, G176, E208, L210, E215, G241, I242, H243, Q285, and E299 each contribute to the ATP site. Residues 133 to 328 (DVAMKKIGLE…IAKVAAKLAV (196 aa)) form the ATP-grasp 1 domain. Q285, E299, and N301 together coordinate Mg(2+). Q285, E299, and N301 together coordinate Mn(2+). The interval 404 to 553 (VGATGFDPKV…YSTYEEECEA (150 aa)) is oligomerization domain. Residues 554 to 936 (NPSTDREKIM…AFAKAQLGSN (383 aa)) are carbamoyl phosphate synthetic domain. The ATP-grasp 2 domain occupies 679 to 870 (QHAVDRLKLK…LAKVAARVMA (192 aa)). ATP is bound by residues R715, H754, L756, E761, G786, V787, H788, S789, Q829, and E841. Residues Q829, E841, and N843 each contribute to the Mg(2+) site. Mn(2+) is bound by residues Q829, E841, and N843. An MGS-like domain is found at 937–1073 (STMKKHGRAL…SVQEMHAQIK (137 aa)). The tract at residues 937 to 1073 (STMKKHGRAL…SVQEMHAQIK (137 aa)) is allosteric domain.

It belongs to the CarB family. As to quaternary structure, composed of two chains; the small (or glutamine) chain promotes the hydrolysis of glutamine to ammonia, which is used by the large (or ammonia) chain to synthesize carbamoyl phosphate. Tetramer of heterodimers (alpha,beta)4. The cofactor is Mg(2+). Requires Mn(2+) as cofactor.

It carries out the reaction hydrogencarbonate + L-glutamine + 2 ATP + H2O = carbamoyl phosphate + L-glutamate + 2 ADP + phosphate + 2 H(+). It catalyses the reaction hydrogencarbonate + NH4(+) + 2 ATP = carbamoyl phosphate + 2 ADP + phosphate + 2 H(+). The protein operates within amino-acid biosynthesis; L-arginine biosynthesis; carbamoyl phosphate from bicarbonate: step 1/1. It participates in pyrimidine metabolism; UMP biosynthesis via de novo pathway; (S)-dihydroorotate from bicarbonate: step 1/3. Functionally, large subunit of the glutamine-dependent carbamoyl phosphate synthetase (CPSase). CPSase catalyzes the formation of carbamoyl phosphate from the ammonia moiety of glutamine, carbonate, and phosphate donated by ATP, constituting the first step of 2 biosynthetic pathways, one leading to arginine and/or urea and the other to pyrimidine nucleotides. The large subunit (synthetase) binds the substrates ammonia (free or transferred from glutamine from the small subunit), hydrogencarbonate and ATP and carries out an ATP-coupled ligase reaction, activating hydrogencarbonate by forming carboxy phosphate which reacts with ammonia to form carbamoyl phosphate. The protein is Carbamoyl phosphate synthase large chain of Escherichia coli O157:H7.